Reading from the N-terminus, the 161-residue chain is Protein UXT homolog (161 aa).

The protein belongs to the UXT family.

The polypeptide is Protein UXT homolog (Dictyostelium discoideum (Social amoeba)).